We begin with the raw amino-acid sequence, 361 residues long: Tetraacyldisaccharide 4'-kinase (361 aa).

Residue 68–75 (TVGGTGKT) participates in ATP binding.

It belongs to the LpxK family.

The catalysed reaction is a lipid A disaccharide + ATP = a lipid IVA + ADP + H(+). The protein operates within glycolipid biosynthesis; lipid IV(A) biosynthesis; lipid IV(A) from (3R)-3-hydroxytetradecanoyl-[acyl-carrier-protein] and UDP-N-acetyl-alpha-D-glucosamine: step 6/6. In terms of biological role, transfers the gamma-phosphate of ATP to the 4'-position of a tetraacyldisaccharide 1-phosphate intermediate (termed DS-1-P) to form tetraacyldisaccharide 1,4'-bis-phosphate (lipid IVA). The polypeptide is Tetraacyldisaccharide 4'-kinase (Pelobacter propionicus (strain DSM 2379 / NBRC 103807 / OttBd1)).